Reading from the N-terminus, the 198-residue chain is Putative NADH dehydrogenase/NAD(P)H nitroreductase XOO4267 (198 aa).

It belongs to the nitroreductase family. HadB/RutE subfamily. It depends on FMN as a cofactor.

The polypeptide is Putative NADH dehydrogenase/NAD(P)H nitroreductase XOO4267 (Xanthomonas oryzae pv. oryzae (strain KACC10331 / KXO85)).